A 317-amino-acid polypeptide reads, in one-letter code: Urease accessory protein 6 (317 aa).

The protein belongs to the UreF family. As to quaternary structure, URE4, URE6 and URE7 may form a complex that acts as a GTP-hydrolysis-dependent molecular chaperone, activating the urease apoprotein URE1.

Urease accessory protein required for the maturation and activation of urease via the functional incorporation of the urease nickel metallocenter. Plays a role in host brain invasion. This is Urease accessory protein 6 from Cryptococcus neoformans var. grubii serotype A (strain H99 / ATCC 208821 / CBS 10515 / FGSC 9487) (Filobasidiella neoformans var. grubii).